A 321-amino-acid chain; its full sequence is Torsin-2A (321 aa).

Residues Met1 to Ala26 form the signal peptide. Gly93–Ser100 contributes to the ATP binding site. N-linked (GlcNAc...) asparagine glycosylation is present at Asn149.

It belongs to the ClpA/ClpB family. Torsin subfamily. As to quaternary structure, homohexamer. Interacts with TOR1AIP1.

It localises to the endoplasmic reticulum lumen. This is Torsin-2A (TOR2A) from Bos taurus (Bovine).